The primary structure comprises 151 residues: Deoxyuridine 5'-triphosphate nucleotidohydrolase (151 aa).

Substrate is bound by residues 70–72, Asn83, and 87–89; these read RSG and VID.

It belongs to the dUTPase family. It depends on Mg(2+) as a cofactor.

The enzyme catalyses dUTP + H2O = dUMP + diphosphate + H(+). It functions in the pathway pyrimidine metabolism; dUMP biosynthesis; dUMP from dCTP (dUTP route): step 2/2. Its function is as follows. This enzyme is involved in nucleotide metabolism: it produces dUMP, the immediate precursor of thymidine nucleotides and it decreases the intracellular concentration of dUTP so that uracil cannot be incorporated into DNA. The polypeptide is Deoxyuridine 5'-triphosphate nucleotidohydrolase (Desulfitobacterium hafniense (strain DSM 10664 / DCB-2)).